We begin with the raw amino-acid sequence, 344 residues long: Arginine N-succinyltransferase (344 aa).

Leu125 is a succinyl-CoA binding site. Residue His229 is the Proton donor of the active site.

Belongs to the arginine N-succinyltransferase family.

It catalyses the reaction succinyl-CoA + L-arginine = N(2)-succinyl-L-arginine + CoA + H(+). The protein operates within amino-acid degradation; L-arginine degradation via AST pathway; L-glutamate and succinate from L-arginine: step 1/5. Functionally, catalyzes the transfer of succinyl-CoA to arginine to produce N(2)-succinylarginine. The protein is Arginine N-succinyltransferase of Escherichia coli O6:K15:H31 (strain 536 / UPEC).